The primary structure comprises 204 residues: Tumor necrosis factor alpha-induced protein 8-like protein 3 (204 aa).

Positions 1-10 are enriched in acidic residues; the sequence is MDSDSGEQSE. A disordered region spans residues 1-20; that stretch reads MDSDSGEQSEGEPGTAAGPH. The interval 21-204 is binding to phosphoinositides; it reads VFSSKNLALQ…INKLLDDKIL (184 aa).

This sequence belongs to the TNFAIP8 family. In terms of tissue distribution, widely expressed (at protein level).

The protein localises to the cytoplasm. It is found in the cell membrane. Its function is as follows. Acts as a lipid transfer protein. Preferentially captures and shuttles two lipid second messengers, i.e., phosphatidylinositol 4,5- bisphosphate and phosphatidylinositol 3,4,5-trisphosphate and increases their levels in the plasma membrane. Additionally, may also function as a lipid-presenting protein to enhance the activity of the PI3K-AKT and MEK-ERK pathways. May act as a regulator of tumorigenesis through its activation of phospholipid signaling. This is Tumor necrosis factor alpha-induced protein 8-like protein 3 (Tnfaip8l3) from Mus musculus (Mouse).